A 153-amino-acid polypeptide reads, in one-letter code: Large ribosomal subunit protein uL29 (153 aa).

Positions 1–83 are large ribosomal subunit protein uL29; that stretch reads MNKELRAKTN…KEQTKQKEIQ (83 aa). Residues 84 to 153 are unknown; the sequence is ESVKKIKQLR…NVKAKTKKKG (70 aa). Positions 100-121 are enriched in basic and acidic residues; the sequence is NKEKRLANAEKVKAAPKPEQKT. The interval 100 to 153 is disordered; it reads NKEKRLANAEKVKAAPKPEQKTKKVKKAPKKTETVKPTTNKNKKNVKAKTKKKG. A compositionally biased stretch (basic residues) spans 140–153; sequence KNKKNVKAKTKKKG.

It belongs to the universal ribosomal protein uL29 family.

The polypeptide is Large ribosomal subunit protein uL29 (Mycoplasmoides gallisepticum (strain R(low / passage 15 / clone 2)) (Mycoplasma gallisepticum)).